Reading from the N-terminus, the 396-residue chain is Elongation factor Tu 1 (396 aa).

One can recognise a tr-type G domain in the interval 10 to 206; it reads KPHVNVGTIG…QIDSYIPEPE (197 aa). A G1 region spans residues 19–26; that stretch reads GHIDHGKT. GTP is bound at residue 19-26; that stretch reads GHIDHGKT. Residue Thr26 coordinates Mg(2+). The tract at residues 60–64 is G2; the sequence is GITIA. The G3 stretch occupies residues 81 to 84; it reads DCPG. GTP is bound by residues 81 to 85 and 136 to 139; these read DCPGH and NKCD. The interval 136–139 is G4; the sequence is NKCD. The interval 174-176 is G5; that stretch reads SAL.

This sequence belongs to the TRAFAC class translation factor GTPase superfamily. Classic translation factor GTPase family. EF-Tu/EF-1A subfamily. As to quaternary structure, monomer.

The protein resides in the cytoplasm. It carries out the reaction GTP + H2O = GDP + phosphate + H(+). GTP hydrolase that promotes the GTP-dependent binding of aminoacyl-tRNA to the A-site of ribosomes during protein biosynthesis. The sequence is that of Elongation factor Tu 1 from Desulfotalea psychrophila (strain LSv54 / DSM 12343).